Reading from the N-terminus, the 334-residue chain is Mediator of RNA polymerase II transcription subunit 4 (334 aa).

Residues 76-100 (LIRTLKAHVEKRDEVIQQVENNLKA) adopt a coiled-coil conformation. Positions 188–203 (SSAQKPIIASPSASSS) are enriched in low complexity. Disordered regions lie at residues 188-234 (SSAQ…GYGA) and 252-334 (EKQW…GRNK). Composition is skewed to polar residues over residues 204–225 (NGGTAPTRTVGTPLVNSATNGD) and 264–282 (ATSSQSPLSGAPQSPSSPS).

It belongs to the Mediator complex subunit 4 family. As to quaternary structure, component of the Mediator complex.

The protein resides in the nucleus. Component of the Mediator complex, a coactivator involved in the regulated transcription of nearly all RNA polymerase II-dependent genes. Mediator functions as a bridge to convey information from gene-specific regulatory proteins to the basal RNA polymerase II transcription machinery. Mediator is recruited to promoters by direct interactions with regulatory proteins and serves as a scaffold for the assembly of a functional preinitiation complex with RNA polymerase II and the general transcription factors. This is Mediator of RNA polymerase II transcription subunit 4 (mdt-4) from Caenorhabditis briggsae.